The chain runs to 171 residues: 3-hydroxydecanoyl-[acyl-carrier-protein] dehydratase (171 aa).

The active site involves histidine 70.

It belongs to the thioester dehydratase family. FabA subfamily. As to quaternary structure, homodimer.

The protein resides in the cytoplasm. The catalysed reaction is a (3R)-hydroxyacyl-[ACP] = a (2E)-enoyl-[ACP] + H2O. It catalyses the reaction (3R)-hydroxydecanoyl-[ACP] = (2E)-decenoyl-[ACP] + H2O. It carries out the reaction (2E)-decenoyl-[ACP] = (3Z)-decenoyl-[ACP]. It functions in the pathway lipid metabolism; fatty acid biosynthesis. In terms of biological role, necessary for the introduction of cis unsaturation into fatty acids. Catalyzes the dehydration of (3R)-3-hydroxydecanoyl-ACP to E-(2)-decenoyl-ACP and then its isomerization to Z-(3)-decenoyl-ACP. Can catalyze the dehydratase reaction for beta-hydroxyacyl-ACPs with saturated chain lengths up to 16:0, being most active on intermediate chain length. The chain is 3-hydroxydecanoyl-[acyl-carrier-protein] dehydratase from Xanthomonas axonopodis pv. citri (strain 306).